The chain runs to 149 residues: UPF0208 membrane protein VSAL_I2111 (149 aa).

A run of 2 helical transmembrane segments spans residues 41–61 (FAVK…MVFN) and 69–89 (SIII…WLGN).

The protein belongs to the UPF0208 family.

The protein localises to the cell inner membrane. This Aliivibrio salmonicida (strain LFI1238) (Vibrio salmonicida (strain LFI1238)) protein is UPF0208 membrane protein VSAL_I2111.